The following is a 443-amino-acid chain: Histidinol dehydrogenase (443 aa).

3 residues coordinate NAD(+): Tyr141, Gln203, and Asn226. Ser249, Gln271, and His274 together coordinate substrate. Zn(2+)-binding residues include Gln271 and His274. Catalysis depends on proton acceptor residues Glu339 and His340. Residues His340, Asp373, Glu427, and His432 each coordinate substrate. Asp373 is a binding site for Zn(2+). Position 432 (His432) interacts with Zn(2+).

It belongs to the histidinol dehydrogenase family. The cofactor is Zn(2+).

It catalyses the reaction L-histidinol + 2 NAD(+) + H2O = L-histidine + 2 NADH + 3 H(+). It functions in the pathway amino-acid biosynthesis; L-histidine biosynthesis; L-histidine from 5-phospho-alpha-D-ribose 1-diphosphate: step 9/9. In terms of biological role, catalyzes the sequential NAD-dependent oxidations of L-histidinol to L-histidinaldehyde and then to L-histidine. The chain is Histidinol dehydrogenase from Chlorobium luteolum (strain DSM 273 / BCRC 81028 / 2530) (Pelodictyon luteolum).